We begin with the raw amino-acid sequence, 239 residues long: Protein LIFEGUARD 2 (239 aa).

7 helical membrane passes run 41–61, 66–86, 96–116, 121–141, 156–176, 179–199, and 213–233; these read LLVT…SVFF, AGFA…CPLY, YLLL…TCAF, VILE…LYTF, FLFG…LFPL, ISVM…IVYD, and IWAA…LLTL.

It belongs to the BI1 family. Expressed in seedlings, roots, leaves, inflorescences and flowers.

It localises to the membrane. Its function is as follows. Regulates the brassinosteroid (BR) signaling pathway that mediates cell elongation and organ morphogenesis. (Microbial infection) Facilitates the development of the powdery mildew fungus E.cruciferarum. Functionally, (Microbial infection) May prevent cell death upon A.alternata f.sp. lycopersici (AAL) toxin treatment. This is Protein LIFEGUARD 2 from Arabidopsis thaliana (Mouse-ear cress).